The sequence spans 559 residues: Formate--tetrahydrofolate ligase (559 aa).

68-75 (TPAGEGKT) contacts ATP.

It belongs to the formate--tetrahydrofolate ligase family.

It catalyses the reaction (6S)-5,6,7,8-tetrahydrofolate + formate + ATP = (6R)-10-formyltetrahydrofolate + ADP + phosphate. The protein operates within one-carbon metabolism; tetrahydrofolate interconversion. In Rhizobium rhizogenes (strain K84 / ATCC BAA-868) (Agrobacterium radiobacter), this protein is Formate--tetrahydrofolate ligase.